Here is a 242-residue protein sequence, read N- to C-terminus: Ribonuclease 3 (242 aa).

The region spanning 14 to 142 (LRRFAARFAL…VIGALYLSTG (129 aa)) is the RNase III domain. Glu56 contacts Mg(2+). Asp60 is a catalytic residue. Residues Asp128 and Glu131 each contribute to the Mg(2+) site. Residue Glu131 is part of the active site. The 66-residue stretch at 170-235 (NHKSALQELT…ARGAYAALRS (66 aa)) folds into the DRBM domain.

The protein belongs to the ribonuclease III family. Homodimer. Mg(2+) is required as a cofactor.

It is found in the cytoplasm. The enzyme catalyses Endonucleolytic cleavage to 5'-phosphomonoester.. Digests double-stranded RNA. Involved in the processing of primary rRNA transcript to yield the immediate precursors to the large and small rRNAs (23S and 16S). Processes some mRNAs, and tRNAs when they are encoded in the rRNA operon. Processes pre-crRNA and tracrRNA of type II CRISPR loci if present in the organism. This is Ribonuclease 3 from Gloeobacter violaceus (strain ATCC 29082 / PCC 7421).